Here is a 462-residue protein sequence, read N- to C-terminus: Cysteine--tRNA ligase (462 aa).

Cys-29 contacts Zn(2+). The short motif at 31–41 is the 'HIGH' region element; sequence PTVYNHAHIGN. Residues Cys-211, His-236, and Glu-240 each contribute to the Zn(2+) site. Residues 269-273 carry the 'KMSKS' region motif; sequence KMSKS. Lys-272 lines the ATP pocket.

Belongs to the class-I aminoacyl-tRNA synthetase family. As to quaternary structure, monomer. The cofactor is Zn(2+).

Its subcellular location is the cytoplasm. It carries out the reaction tRNA(Cys) + L-cysteine + ATP = L-cysteinyl-tRNA(Cys) + AMP + diphosphate. In Caulobacter sp. (strain K31), this protein is Cysteine--tRNA ligase.